We begin with the raw amino-acid sequence, 562 residues long: NAD-dependent histone deacetylase SIR2 (562 aa).

Residues Met1–Gly67 are disordered. Over residues Ser11–Thr25 the composition is skewed to polar residues. Residues Gln26–Asp36 are compositionally biased toward basic and acidic residues. Positions Arg237–Thr527 constitute a Deacetylase sirtuin-type domain. NAD(+) is bound by residues Gly262 to Tyr281 and Gln344 to Asp347. The Proton acceptor role is filled by His364. Zn(2+) is bound by residues Cys372, Cys375, Cys396, and Cys399. Residues Gly471–Ser473, Asn496–Asp498, and Cys513 each bind NAD(+).

It belongs to the sirtuin family. Class I subfamily. Homomultimer. Forms a complex with SIR3 and SIR4. Component of the RENT complex, at least composed of SIR2, CDC14 and NET1. The RENT complex interacts with FOB1. Interacts with ESC8. Interacts with and ZDS2. Interacts with MCM10. Interacts with SLX5. Interacts with NSI1. Requires Zn(2+) as cofactor.

It is found in the nucleus. The protein localises to the nucleolus. The catalysed reaction is N(6)-acetyl-L-lysyl-[protein] + NAD(+) + H2O = 2''-O-acetyl-ADP-D-ribose + nicotinamide + L-lysyl-[protein]. With respect to regulation, its activity is increased by calorie restriction, which slows the pace of aging and increases maximum lifespan. Activated by resveratrol (3,5,4'-trihydroxy-trans-stilbene), which is found in red wine. Functionally, NAD-dependent deacetylase, which participates in a wide range of cellular events including chromosome silencing, chromosome segregation, DNA recombination and the determination of life span. Involved in transcriptional repression of the silent mating-type loci HML and HMR and telomeric silencing via its association with SIR3 and SIR4. Plays a central role in ribosomal DNA (rDNA) silencing via its association with the RENT complex, preventing hyperrecombination, and repressing transcription from foreign promoters, which contributes to extending life span. Probably represses transcription via the formation of heterochromatin structure, which involves the compaction of chromatin fiber into a more condensed form, although this complex in at least one case can still bind euchromatic levels of positive transcription regulators. Although it displays some NAD-dependent histone deacetylase activity on histone H3K9Ac and H3K14Ac and histone H4K16Ac in vitro, such activity is unclear in vivo and may not be essential. This Saccharomyces cerevisiae (strain ATCC 204508 / S288c) (Baker's yeast) protein is NAD-dependent histone deacetylase SIR2 (SIR2).